Consider the following 659-residue polypeptide: Sodium/nucleoside cotransporter 2 (659 aa).

Residues 1 to 10 (MAKSEGRKSA) are compositionally biased toward basic and acidic residues. The segment at 1 to 22 (MAKSEGRKSASQDTSENGMENP) is disordered. Position 46 is a phosphoserine (Ser46). The next 14 membrane-spanning stretches (helical) occupy residues 81–101 (ILLG…CILN), 105–124 (ALAL…CHFL), 149–167 (KRVF…LALD), 173–193 (EQLI…ACSK), 201–221 (RTVF…IRTE), 234–254 (IQIF…DTLV), 261–281 (QSLP…YLGL), 296–315 (TMGT…FVGM), 337–356 (VMTG…FISF), 363–382 (LISA…KLVY), 424–444 (VAAN…TLSW), 455–475 (TFQV…GVQW), 530–550 (ATFS…LGGL), and 568–588 (ALFT…ILYV).

The protein belongs to the concentrative nucleoside transporter (CNT) (TC 2.A.41) family. As to expression, expressed in liver (in bile canalicular membrane vesicles (CMV) but not in sinusoidal vesicles), jejunum, spleen and heart. Also expressed in brain and skeletal muscle. Not expressed in kidney, muscle and lung.

It localises to the membrane. It is found in the apicolateral cell membrane. The enzyme catalyses adenosine(out) + Na(+)(out) = adenosine(in) + Na(+)(in). It catalyses the reaction inosine(out) + Na(+)(out) = inosine(in) + Na(+)(in). The catalysed reaction is guanosine(out) + Na(+)(out) = guanosine(in) + Na(+)(in). It carries out the reaction uridine(out) + Na(+)(out) = uridine(in) + Na(+)(in). Inhibited by formycin B, partially inhibited by purine analog ara-A. Sodium-dependent and purine-selective. Exhibits the transport characteristics of the nucleoside transport system cif or N1 subtype (N1/cif) (selective for purine nucleosides and uridine). Accepts purine, analogs of purine nucleosides and uridine, and exhibits high affinity for adenosine. May contribute to regulate the transport of organic compounds in testes across the blood-testis-barrier. The sequence is that of Sodium/nucleoside cotransporter 2 (Slc28a2) from Rattus norvegicus (Rat).